Here is a 350-residue protein sequence, read N- to C-terminus: Flap endonuclease 1 (350 aa).

An N-domain region spans residues 1 to 101; it reads MGVNLRELIP…REVEERLRRK (101 aa). 7 residues coordinate Mg(2+): Asp-30, Asp-83, Glu-155, Glu-157, Asp-176, Asp-178, and Asp-239. Residues 119–261 are I-domain; sequence EARKYAMMAA…TALRLVKSLG (143 aa). Residues 341–349 are interaction with PCNA; it reads RQSRLDMWF.

It belongs to the XPG/RAD2 endonuclease family. FEN1 subfamily. Interacts with PCNA. PCNA stimulates the nuclease activity without altering cleavage specificity. Requires Mg(2+) as cofactor.

Structure-specific nuclease with 5'-flap endonuclease and 5'-3' exonuclease activities involved in DNA replication and repair. During DNA replication, cleaves the 5'-overhanging flap structure that is generated by displacement synthesis when DNA polymerase encounters the 5'-end of a downstream Okazaki fragment. Binds the unpaired 3'-DNA end and kinks the DNA to facilitate 5' cleavage specificity. Cleaves one nucleotide into the double-stranded DNA from the junction in flap DNA, leaving a nick for ligation. Also involved in the base excision repair (BER) pathway. Acts as a genome stabilization factor that prevents flaps from equilibrating into structures that lead to duplications and deletions. Also possesses 5'-3' exonuclease activity on nicked or gapped double-stranded DNA. This chain is Flap endonuclease 1, found in Aeropyrum pernix (strain ATCC 700893 / DSM 11879 / JCM 9820 / NBRC 100138 / K1).